Here is a 62-residue protein sequence, read N- to C-terminus: Large ribosomal subunit protein eL37 (62 aa).

Residues Cys20, Cys23, Cys35, and Cys38 each contribute to the Zn(2+) site. A C4-type zinc finger spans residues 20 to 38 (CRRCGRKAFNVKKGYCAAC).

The protein belongs to the eukaryotic ribosomal protein eL37 family. Requires Zn(2+) as cofactor.

Functionally, binds to the 23S rRNA. The sequence is that of Large ribosomal subunit protein eL37 (rpl37e) from Pyrococcus abyssi (strain GE5 / Orsay).